Consider the following 317-residue polypeptide: Melanocyte-stimulating hormone receptor (317 aa).

Residues 1–37 lie on the Extracellular side of the membrane; the sequence is MPALGSQRRLLGSLNCTPPATLPFTLAPNRTGPQCLE. An N-linked (GlcNAc...) asparagine glycan is attached at asparagine 29. The chain crosses the membrane as a helical span at residues 38–63; the sequence is VSIPDGLFLSLGLVSLVENVLVVAAI. Topologically, residues 64–72 are cytoplasmic; sequence AKNRNLHSP. A helical membrane pass occupies residues 73–93; sequence MYYFICCLAVSDLLVSVSNVL. Topologically, residues 94-118 are extracellular; sequence ETAVMLLLEAGVLATQAAVVQQLDN. A helical transmembrane segment spans residues 119–140; that stretch reads VIDVLICGSMVSSLCFLGAIAV. Residues 141–163 are Cytoplasmic-facing; the sequence is DRYISIFYALRYHSVVTLPRAWR. A helical membrane pass occupies residues 164 to 183; that stretch reads IIAAIWVASILTSLLFITYY. Over 184 to 191 the chain is Extracellular; sequence NHKVILLC. A helical transmembrane segment spans residues 192 to 211; the sequence is LVGLFIAMLALMAVLYVHML. The Cytoplasmic segment spans residues 212–240; it reads ARACQHARGIARLQKRQRPIHQGFGLKGA. A helical membrane pass occupies residues 241-266; it reads ATLTILLGVFFLCWGPFFLHLSLIVL. Over 267 to 279 the chain is Extracellular; it reads CPQHPTCGCIFKN. The chain crosses the membrane as a helical span at residues 280–300; it reads FNLFLALIICNAIVDPLIYAF. Residues 301-317 lie on the Cytoplasmic side of the membrane; sequence RSQELRKTLQEVLQCSW. Cysteine 315 carries the S-palmitoyl cysteine lipid modification.

This sequence belongs to the G-protein coupled receptor 1 family. As to quaternary structure, interacts with MGRN1, but does not undergo MGRN1-mediated ubiquitination; this interaction competes with GNAS-binding and thus inhibits agonist-induced cAMP production. Interacts with OPN3; the interaction results in a decrease in MC1R-mediated cAMP signaling and ultimately a decrease in melanin production in melanocytes. As to expression, highly expressed in the testis.

It is found in the cell membrane. Functionally, receptor for MSH (alpha, beta) and ACTH. Does not seem to be active with gamma-MSH. The activity of this receptor is mediated by G proteins which activate adenylate cyclase. Mediates melanogenesis, the production of eumelanin (black/brown) and phaeomelanin (red/yellow), via regulation of cAMP signaling in melanocytes. The polypeptide is Melanocyte-stimulating hormone receptor (MC1R) (Bos taurus (Bovine)).